We begin with the raw amino-acid sequence, 447 residues long: tRNA-2-methylthio-N(6)-dimethylallyladenosine synthase (447 aa).

In terms of domain architecture, MTTase N-terminal spans 8–126 (KKVVTLAYGC…FQRLLEEAEE (119 aa)). Residues C17, C53, C87, C162, C166, and C169 each coordinate [4Fe-4S] cluster. The Radical SAM core domain maps to 148 to 378 (AKGKLKAYVN…ITVQNAQSLA (231 aa)). The TRAM domain maps to 381–444 (QEMIGKTCEV…SWTLFGECRA (64 aa)).

This sequence belongs to the methylthiotransferase family. MiaB subfamily. Monomer. [4Fe-4S] cluster serves as cofactor.

The protein localises to the cytoplasm. The catalysed reaction is N(6)-dimethylallyladenosine(37) in tRNA + (sulfur carrier)-SH + AH2 + 2 S-adenosyl-L-methionine = 2-methylsulfanyl-N(6)-dimethylallyladenosine(37) in tRNA + (sulfur carrier)-H + 5'-deoxyadenosine + L-methionine + A + S-adenosyl-L-homocysteine + 2 H(+). Catalyzes the methylthiolation of N6-(dimethylallyl)adenosine (i(6)A), leading to the formation of 2-methylthio-N6-(dimethylallyl)adenosine (ms(2)i(6)A) at position 37 in tRNAs that read codons beginning with uridine. The polypeptide is tRNA-2-methylthio-N(6)-dimethylallyladenosine synthase (Desulfitobacterium hafniense (strain Y51)).